A 145-amino-acid polypeptide reads, in one-letter code: D-aminoacyl-tRNA deacylase (145 aa).

A Gly-cisPro motif, important for rejection of L-amino acids motif is present at residues 137 to 138; it reads GP.

This sequence belongs to the DTD family. Homodimer.

Its subcellular location is the cytoplasm. The enzyme catalyses glycyl-tRNA(Ala) + H2O = tRNA(Ala) + glycine + H(+). It catalyses the reaction a D-aminoacyl-tRNA + H2O = a tRNA + a D-alpha-amino acid + H(+). In terms of biological role, an aminoacyl-tRNA editing enzyme that deacylates mischarged D-aminoacyl-tRNAs. Also deacylates mischarged glycyl-tRNA(Ala), protecting cells against glycine mischarging by AlaRS. Acts via tRNA-based rather than protein-based catalysis; rejects L-amino acids rather than detecting D-amino acids in the active site. By recycling D-aminoacyl-tRNA to D-amino acids and free tRNA molecules, this enzyme counteracts the toxicity associated with the formation of D-aminoacyl-tRNA entities in vivo and helps enforce protein L-homochirality. The protein is D-aminoacyl-tRNA deacylase of Photobacterium profundum (strain SS9).